Here is an 896-residue protein sequence, read N- to C-terminus: DNA double-strand break repair Rad50 ATPase (896 aa).

Residues 32–38 and glutamine 137 contribute to the ATP site; that span reads NGAGKSS. Coiled-coil stretches lie at residues 200 to 274, 412 to 505, 580 to 611, 636 to 669, and 702 to 731; these read RRYQ…KLQE, EEIR…LISM, IGDIEALRKQKDEVSKKLKDAEDRTHEIESEF, IKLAEDLKRQRETLREKVKDLRSRSAGMDEIQKR, and RSKVETLRSHVSEIEQRISDRERDIERMKK. One can recognise a Zinc-hook domain in the interval 411 to 507; the sequence is YEEIRRDIDE…KKRQLISMES (97 aa). Positions 455 and 458 each coordinate Zn(2+).

It belongs to the SMC family. RAD50 subfamily. As to quaternary structure, homodimer. Forms a heterotetramer composed of two Mre11 subunits and two Rad50 subunits. Zn(2+) serves as cofactor.

In terms of biological role, part of the Rad50/Mre11 complex, which is involved in the early steps of DNA double-strand break (DSB) repair. The complex may facilitate opening of the processed DNA ends to aid in the recruitment of HerA and NurA. Rad50 controls the balance between DNA end bridging and DNA resection via ATP-dependent structural rearrangements of the Rad50/Mre11 complex. This chain is DNA double-strand break repair Rad50 ATPase, found in Thermoplasma acidophilum (strain ATCC 25905 / DSM 1728 / JCM 9062 / NBRC 15155 / AMRC-C165).